Consider the following 487-residue polypeptide: UDP-N-acetylmuramate--L-alanine ligase (487 aa).

ATP is bound at residue 124 to 130 (GTHGKTT).

It belongs to the MurCDEF family.

It localises to the cytoplasm. It carries out the reaction UDP-N-acetyl-alpha-D-muramate + L-alanine + ATP = UDP-N-acetyl-alpha-D-muramoyl-L-alanine + ADP + phosphate + H(+). The protein operates within cell wall biogenesis; peptidoglycan biosynthesis. Cell wall formation. The sequence is that of UDP-N-acetylmuramate--L-alanine ligase from Acaryochloris marina (strain MBIC 11017).